A 231-amino-acid chain; its full sequence is MKITWLGHAAFLLEGSMKVLIDPFLTGNPNAPVKPEEVKADYILVTHGHGDHLGDAVEIAKRNNAPIICIHELSRILSRYDVETMGMNMGGTARTGSIAVTMVPAWHSADLEDEQGNIISAGLPAGFIVSMDGVRVYHTGDTDVFLDMQLIGELHRPDVMLLPIGDYYTMGIAGAVKALELVKPKVAIPMHYNTFPLVEKDPEDFRKAVKAKGLDVEVVILKPGESYEFNK.

Belongs to the UPF0173 family.

The polypeptide is UPF0173 metal-dependent hydrolase AF_1265 (Archaeoglobus fulgidus (strain ATCC 49558 / DSM 4304 / JCM 9628 / NBRC 100126 / VC-16)).